A 691-amino-acid chain; its full sequence is Elongation factor G (691 aa).

The tr-type G domain maps to 8-282 (ERVRNIGIAA…AVVDYLPAPV (275 aa)). GTP-binding positions include 17-24 (AHIDAGKT), 81-85 (DTPGH), and 135-138 (NKMD).

This sequence belongs to the TRAFAC class translation factor GTPase superfamily. Classic translation factor GTPase family. EF-G/EF-2 subfamily.

The protein resides in the cytoplasm. Catalyzes the GTP-dependent ribosomal translocation step during translation elongation. During this step, the ribosome changes from the pre-translocational (PRE) to the post-translocational (POST) state as the newly formed A-site-bound peptidyl-tRNA and P-site-bound deacylated tRNA move to the P and E sites, respectively. Catalyzes the coordinated movement of the two tRNA molecules, the mRNA and conformational changes in the ribosome. The sequence is that of Elongation factor G from Prochlorococcus marinus (strain MIT 9211).